The primary structure comprises 502 residues: Glutamate--tRNA ligase (502 aa).

Residues 9-19 (PSPTGDPHVGT) carry the 'HIGH' region motif. Zn(2+) contacts are provided by Cys106, Cys108, Cys133, and His135. Residues 250-254 (KLSKR) carry the 'KMSKS' region motif. Lys253 is an ATP binding site.

Belongs to the class-I aminoacyl-tRNA synthetase family. Glutamate--tRNA ligase type 1 subfamily. Monomer. Zn(2+) is required as a cofactor.

It is found in the cytoplasm. It carries out the reaction tRNA(Glu) + L-glutamate + ATP = L-glutamyl-tRNA(Glu) + AMP + diphosphate. Functionally, catalyzes the attachment of glutamate to tRNA(Glu) in a two-step reaction: glutamate is first activated by ATP to form Glu-AMP and then transferred to the acceptor end of tRNA(Glu). This Protochlamydia amoebophila (strain UWE25) protein is Glutamate--tRNA ligase.